The primary structure comprises 971 residues: Kinesin-like protein KIN-14C (971 aa).

A Calponin-homology (CH) domain is found at 14–119 (ANRRAEVIDW…CLLALKDNVA (106 aa)). Positions 272-357 (IKALETLVNG…QMETKARQME (86 aa)) form a coiled coil. The Kinesin motor domain maps to 472 to 799 (NIRVYCRVRP…LKFAERVSGV (328 aa)). 556–563 (GQTGSGKT) contributes to the ATP binding site. Residues 809–844 (EGKDIKELLEQVASLKDTIARKDMEIEQLQLLKSKS) are a coiled coil. Polar residues predominate over residues 839 to 881 (LLKSKSPNSMTDRNGSNLLRQSTSSTGLSSLPVASQQNQQLSG). Positions 839-971 (LLKSKSPNSM…GSLAKPSKRR (133 aa)) are disordered.

Belongs to the TRAFAC class myosin-kinesin ATPase superfamily. Kinesin family. KIN-14 subfamily.

In Oryza sativa subsp. japonica (Rice), this protein is Kinesin-like protein KIN-14C.